The sequence spans 601 residues: Transcription factor ATEG_07666 (601 aa).

The segment at residues 17 to 44 (CEECRRRKARCDRVRPKCGFCTENGMQC) is a DNA-binding region (zn(2)-C6 fungal-type).

It localises to the nucleus. Its function is as follows. Specific transcriptional regulator for the azasperpyranone A biosynthesis cluster B. The chain is Transcription factor ATEG_07666 from Aspergillus terreus (strain NIH 2624 / FGSC A1156).